Here is a 1171-residue protein sequence, read N- to C-terminus: Phytochrome B (1171 aa).

The segment covering 1–19 (MASGSRATPTRSPSSARPA) has biased composition (low complexity). The tract at residues 1-53 (MASGSRATPTRSPSSARPAAPRHQHHHSQSSGGSTSRAGGGGGGGGGGGGGAA) is disordered. The span at 38 to 52 (AGGGGGGGGGGGGGA) shows a compositional bias: gly residues. The GAF domain occupies 259–442 (DVKLLCDTVV…AFGLQLNMEL (184 aa)). Cys-364 serves as a coordination point for phytochromobilin. PAS domains lie at 661-732 (VARE…LRGD) and 795-866 (DYKA…MIVL). The Histidine kinase domain occupies 943-1161 (YIYQEIKNPL…FFHIVLELPQ (219 aa)).

Belongs to the phytochrome family. As to quaternary structure, homodimer. Post-translationally, contains one covalently linked phytochromobilin chromophore.

In terms of biological role, regulatory photoreceptor which exists in two forms that are reversibly interconvertible by light: the Pr form that absorbs maximally in the red region of the spectrum and the Pfr form that absorbs maximally in the far-red region. Photoconversion of Pr to Pfr induces an array of morphogenic responses, whereas reconversion of Pfr to Pr cancels the induction of those responses. Pfr controls the expression of a number of nuclear genes including those encoding the small subunit of ribulose-bisphosphate carboxylase, chlorophyll A/B binding protein, protochlorophyllide reductase, rRNA, etc. It also controls the expression of its own gene(s) in a negative feedback fashion. In Oryza sativa subsp. japonica (Rice), this protein is Phytochrome B (PHYB).